We begin with the raw amino-acid sequence, 283 residues long: Lectin subunit alpha (283 aa).

Positions 1-23 (MSLTMKNVEGFVIFLVIFTSTAA) are cleaved as a signal peptide. In terms of domain architecture, C-type lectin spans 51-159 (HECARHDQQL…NVKMGYICEP (109 aa)). 2 cysteine pairs are disulfide-bonded: Cys53-Cys157 and Cys132-Cys149.

In terms of biological role, role in the defense system of the organism against microorganisms. This lectin binds galactose. The protein is Lectin subunit alpha of Sarcophaga peregrina (Flesh fly).